Here is a 397-residue protein sequence, read N- to C-terminus: Elongation factor Tu (397 aa).

In terms of domain architecture, tr-type G spans 10 to 207; the sequence is KPHVNIGTIG…AVDESIPDPV (198 aa). The segment at 19 to 26 is G1; the sequence is GHVDHGKT. 19–26 contacts GTP; it reads GHVDHGKT. T26 is a Mg(2+) binding site. The G2 stretch occupies residues 63–67; sequence GITIN. Residues 84-87 form a G3 region; sequence DAPG. Residues 84-88 and 139-142 each bind GTP; these read DAPGH and NKAD. The G4 stretch occupies residues 139 to 142; the sequence is NKAD. Positions 177–179 are G5; it reads SGL.

The protein belongs to the TRAFAC class translation factor GTPase superfamily. Classic translation factor GTPase family. EF-Tu/EF-1A subfamily. In terms of assembly, monomer.

It is found in the cytoplasm. It carries out the reaction GTP + H2O = GDP + phosphate + H(+). In terms of biological role, GTP hydrolase that promotes the GTP-dependent binding of aminoacyl-tRNA to the A-site of ribosomes during protein biosynthesis. In Tropheryma whipplei (strain TW08/27) (Whipple's bacillus), this protein is Elongation factor Tu.